We begin with the raw amino-acid sequence, 52 residues long: Phospholamban (52 aa).

M1 is subject to N-acetylmethionine. Over 1-31 (MEKVQYITRSALRRASTLEVNPQARQRLQEL) the chain is Cytoplasmic. S16 bears the Phosphoserine; by PKA mark. T17 carries the phosphothreonine; by CaMK modification. A helical membrane pass occupies residues 32 to 52 (FVNFCLILICLLLICIIVMLL).

Belongs to the phospholamban family. Homopentamer. In terms of processing, phosphorylated in response to beta-adrenergic stimulation. Phosphorylation by PKA abolishes the inhibition of ATP2A2-mediated calcium uptake. Heart.

It is found in the endoplasmic reticulum membrane. The protein localises to the sarcoplasmic reticulum membrane. Its subcellular location is the mitochondrion membrane. The protein resides in the membrane. Reversibly inhibits the activity of ATP2A2/SERCA2 in cardiac sarcoplasmic reticulum by decreasing the apparent affinity of the ATPase for Ca(2+). Binds preferentially to the ATP-bound E1 conformational form of ATP2A2 which predominates at low Ca(2+) concentrations during the diastolic phase of the cardiac cycle. Inhibits ATP2A2 Ca(2+) affinity by disrupting its allosteric activation by ATP. Modulates the contractility of the heart muscle in response to physiological stimuli via its effects on ATP2A2. Modulates calcium re-uptake during muscle relaxation and plays an important role in calcium homeostasis in the heart muscle. The degree of ATP2A2 inhibition depends on the oligomeric state of PLN. ATP2A2 inhibition is alleviated by PLN phosphorylation. This chain is Phospholamban (PLN), found in Gallus gallus (Chicken).